Reading from the N-terminus, the 459-residue chain is Argininosuccinate lyase (459 aa).

It belongs to the lyase 1 family. Argininosuccinate lyase subfamily.

It localises to the cytoplasm. The catalysed reaction is 2-(N(omega)-L-arginino)succinate = fumarate + L-arginine. It participates in amino-acid biosynthesis; L-arginine biosynthesis; L-arginine from L-ornithine and carbamoyl phosphate: step 3/3. The polypeptide is Argininosuccinate lyase (Lactococcus lactis subsp. cremoris (strain SK11)).